A 362-amino-acid polypeptide reads, in one-letter code: Fructose-bisphosphate aldolase (362 aa).

Position 63 (serine 63) interacts with D-glyceraldehyde 3-phosphate. Aspartate 112 (proton donor) is an active-site residue. 4 residues coordinate Zn(2+): histidine 113, aspartate 147, glutamate 177, and histidine 229. Position 230 (glycine 230) interacts with dihydroxyacetone phosphate. Histidine 268 serves as a coordination point for Zn(2+). Residues 269-271 (GGS) and 290-293 (NVDT) contribute to the dihydroxyacetone phosphate site.

This sequence belongs to the class II fructose-bisphosphate aldolase family. As to quaternary structure, homodimer. Zn(2+) is required as a cofactor.

The enzyme catalyses beta-D-fructose 1,6-bisphosphate = D-glyceraldehyde 3-phosphate + dihydroxyacetone phosphate. It functions in the pathway carbohydrate degradation; glycolysis; D-glyceraldehyde 3-phosphate and glycerone phosphate from D-glucose: step 4/4. Catalyzes the aldol condensation of dihydroxyacetone phosphate (DHAP or glycerone-phosphate) with glyceraldehyde 3-phosphate (G3P) to form fructose 1,6-bisphosphate (FBP) in gluconeogenesis and the reverse reaction in glycolysis. This is Fructose-bisphosphate aldolase (fba) from Neurospora crassa (strain ATCC 24698 / 74-OR23-1A / CBS 708.71 / DSM 1257 / FGSC 987).